We begin with the raw amino-acid sequence, 217 residues long: Glycosylphosphatidylinositol anchor biosynthesis protein 11 (217 aa).

Transmembrane regions (helical) follow at residues 45 to 65 (TWLT…KVFN) and 68 to 88 (NTAE…IFQF). The N-linked (GlcNAc...) asparagine glycan is linked to N102. A run of 4 helical transmembrane segments spans residues 107 to 127 (AISI…IILF), 134 to 154 (LLWE…PAVY), 169 to 189 (YFIL…LDWD), and 197 to 217 (IPIV…GAYL).

Belongs to the PIGF family.

It localises to the endoplasmic reticulum membrane. The protein operates within glycolipid biosynthesis; glycosylphosphatidylinositol-anchor biosynthesis. Its function is as follows. Acts in the GPI biosynthetic pathway between GlcNAc-PI synthesis and GPI transfer to protein. This is Glycosylphosphatidylinositol anchor biosynthesis protein 11 (GPI11) from Candida glabrata (strain ATCC 2001 / BCRC 20586 / JCM 3761 / NBRC 0622 / NRRL Y-65 / CBS 138) (Yeast).